Consider the following 765-residue polypeptide: Palmitoyltransferase ZDHHC8 (765 aa).

Topologically, residues 1–13 (MPRSPGTRLKPAK) are cytoplasmic. A helical membrane pass occupies residues 14 to 34 (YIPVATAAALLVGSSTLFFVF). Over 35–52 (TCPWLTRAVSPAVPVYNG) the chain is Lumenal. The helical transmembrane segment at 53 to 73 (IIFLFVLANFSMATFMDPGVF) threads the bilayer. Over 74-148 (PRADEDEDKE…NCIGRRNYRY (75 aa)) the chain is Cytoplasmic. In terms of domain architecture, DHHC spans 104–154 (KWCATCHFYRPPRCSHCSVCDNCVEDFDHHCPWVNNCIGRRNYRYFFLFLL). Cys134 (S-palmitoyl cysteine intermediate) is an active-site residue. Residues 149–169 (FFLFLLSLSAHMVGVVAFGLV) traverse the membrane as a helical segment. At 170–190 (YVLNHAEGLGAAHTTITMAVM) the chain is on the lumenal side. Residues 191–211 (CVAGLFFIPVIGLTGFHVVLV) form a helical membrane-spanning segment. Over 212-765 (TRGRTTNEHV…VGGTTYEISV (554 aa)) the chain is Cytoplasmic. The tract at residues 290 to 386 (LKAGLGRSKS…PGPDSLTLGE (97 aa)) is disordered. The span at 301–311 (GSLDRLDEKPL) shows a compositional bias: basic and acidic residues. Residues 333–348 (PRPSSAESALSAQRTS) are compositionally biased toward polar residues. Ser337 is subject to Phosphoserine. Omega-N-methylarginine is present on Arg441. Residues 447 to 542 (ALQPLRSEGG…PREPSPVRYD (96 aa)) form a disordered region. Residues Ser606 and Ser627 each carry the phosphoserine modification. A disordered region spans residues 630–747 (SLSSAVSRAP…PGPSASPARH (118 aa)). Over residues 639–655 (PRTSSSSLQADLANNNA) the composition is skewed to polar residues. The segment covering 671–680 (QGPPSPPSTP) has biased composition (pro residues). Phosphoserine is present on residues Ser675, Ser682, Ser725, and Ser743.

The protein belongs to the DHHC palmitoyltransferase family. ERF2/ZDHHC9 subfamily.

The protein localises to the golgi apparatus membrane. Its subcellular location is the mitochondrion membrane. The catalysed reaction is L-cysteinyl-[protein] + hexadecanoyl-CoA = S-hexadecanoyl-L-cysteinyl-[protein] + CoA. Its function is as follows. Palmitoyltransferase that catalyzes the addition of palmitate onto various protein substrates and therefore functions in several unrelated biological processes. Through the palmitoylation of ABCA1 regulates the localization of the transporter to the plasma membrane and thereby regulates its function in cholesterol and phospholipid efflux. Could also pamitoylate the D(2) dopamine receptor DRD2 and regulate its stability and localization to the plasma membrane. Could also play a role in glutamatergic transmission. This Canis lupus familiaris (Dog) protein is Palmitoyltransferase ZDHHC8.